The chain runs to 358 residues: B3 domain-containing transcription factor NGA3 (358 aa).

Polar residues predominate over residues 1-14; that stretch reads MDLSLAPTTTTSSD. Residues 1–45 form a disordered region; it reads MDLSLAPTTTTSSDQEQDRDQELTSNIGASSSSGPSGNNNNLPMM. A compositionally biased stretch (low complexity) spans 25–45; that stretch reads SNIGASSSSGPSGNNNNLPMM. Positions 56–162 form a DNA-binding region, TF-B3; it reads FDKVVTPSDV…KLYIDWRHRP (107 aa). The segment at 310-358 is disordered; the sequence is EIGASSSSSSALRLNLSTDHDDDNDDGDDGDDDQFAKKGKSSLSLNFNP. Residues 329 to 342 are compositionally biased toward acidic residues; it reads HDDDNDDGDDGDDD.

The protein localises to the nucleus. Its function is as follows. Regulates lateral organ growth. Functionally redundant with NGA1, NGA2 and NGA4. This chain is B3 domain-containing transcription factor NGA3 (NGA3), found in Arabidopsis thaliana (Mouse-ear cress).